Reading from the N-terminus, the 208-residue chain is 3-demethoxyubiquinol 3-hydroxylase (208 aa).

Residues Glu-57, Glu-87, His-90, Glu-139, Glu-171, and His-174 each contribute to the Fe cation site.

It belongs to the COQ7 family. The cofactor is Fe cation.

Its subcellular location is the cell membrane. It carries out the reaction a 5-methoxy-2-methyl-3-(all-trans-polyprenyl)benzene-1,4-diol + AH2 + O2 = a 3-demethylubiquinol + A + H2O. It functions in the pathway cofactor biosynthesis; ubiquinone biosynthesis. Functionally, catalyzes the hydroxylation of 2-nonaprenyl-3-methyl-6-methoxy-1,4-benzoquinol during ubiquinone biosynthesis. This chain is 3-demethoxyubiquinol 3-hydroxylase, found in Burkholderia ambifaria (strain ATCC BAA-244 / DSM 16087 / CCUG 44356 / LMG 19182 / AMMD) (Burkholderia cepacia (strain AMMD)).